Reading from the N-terminus, the 105-residue chain is UPF0235 protein RAF_ORF1191 (105 aa).

Belongs to the UPF0235 family.

This Rickettsia africae (strain ESF-5) protein is UPF0235 protein RAF_ORF1191.